We begin with the raw amino-acid sequence, 204 residues long: Signal peptidase I (204 aa).

At 1–10 the chain is on the cytoplasmic side; it reads MNLFKNFLKE. Residues 11 to 30 traverse the membrane as a helical segment; that stretch reads WGLFLLILSLLALSRIFFWS. The Extracellular segment spans residues 31–204; the sequence is NVRVEGHSMD…FWPITRIGTF (174 aa). Catalysis depends on residues Ser-38 and Lys-76.

Belongs to the peptidase S26 family.

It is found in the cell membrane. It catalyses the reaction Cleavage of hydrophobic, N-terminal signal or leader sequences from secreted and periplasmic proteins.. This is Signal peptidase I (lepB) from Streptococcus pneumoniae (strain ATCC BAA-255 / R6).